A 1361-amino-acid polypeptide reads, in one-letter code: Protein transport protein SEC16B homolog (1361 aa).

Phosphoserine is present on S46. 7 disordered regions span residues 82 to 109 (NEGASGSVGEDEPSSIAPEAVQFPHSDA), 487 to 513 (VDDAPQSFQSSQLFSPSAGRSSDGRPP), 984 to 1013 (PVGGMPPPAPHSTKGNLQGNEYQHQQQEAT), 1025 to 1062 (SSLMPPASVEPTHESGGSGRRMAVHTRSVSEPDFGRTP), 1163 to 1204 (ENKS…ARGR), 1216 to 1235 (NPPGRGNSHTMIPSPSVQTA), and 1306 to 1361 (SVNG…EVEL). Over residues 491-503 (PQSFQSSQLFSPS) the composition is skewed to low complexity. Residues 996–1013 (TKGNLQGNEYQHQQQEAT) are compositionally biased toward polar residues. Polar residues-rich tracts occupy residues 1169–1200 (IPSNGNWSSGGPTPSENSSGIPPISHGSNQFS), 1222–1234 (NSHTMIPSPSVQT), and 1308–1325 (NGDNHQPPTSRRTASWSG). Positions 1326-1354 (NFNTSFTPPTSPSTFKPVLLNSSSSSLGE) are enriched in low complexity.

This sequence belongs to the SEC16 family.

It localises to the golgi apparatus. It is found in the endoplasmic reticulum. In terms of biological role, required for protein transport from the endoplasmic reticulum to the Golgi apparatus. The sequence is that of Protein transport protein SEC16B homolog from Arabidopsis thaliana (Mouse-ear cress).